Reading from the N-terminus, the 525-residue chain is GMP synthase [glutamine-hydrolyzing] (525 aa).

A Glutamine amidotransferase type-1 domain is found at 9–207 (RILILDFGSQ…VLEICGCAAL (199 aa)). The Nucleophile role is filled by cysteine 86. Residues histidine 181 and glutamate 183 contribute to the active site. Positions 208 to 400 (WTPATIIEDA…LGLPYDMLYR (193 aa)) constitute a GMPS ATP-PPase domain. Position 235–241 (235–241 (SGGVDSS)) interacts with ATP.

In terms of assembly, homodimer.

It carries out the reaction XMP + L-glutamine + ATP + H2O = GMP + L-glutamate + AMP + diphosphate + 2 H(+). The protein operates within purine metabolism; GMP biosynthesis; GMP from XMP (L-Gln route): step 1/1. Catalyzes the synthesis of GMP from XMP. This is GMP synthase [glutamine-hydrolyzing] from Edwardsiella ictaluri (strain 93-146).